The sequence spans 136 residues: Histone H2B (136 aa).

Over residues 1–10 (MPPKAADKKP) the composition is skewed to basic and acidic residues. A disordered region spans residues 1-44 (MPPKAADKKPAAKAPVASKAPEKKDAGKKTASTGEKKKRTKARR). N6-acetyllysine; alternate occurs at positions 8 and 9. Glycyl lysine isopeptide (Lys-Gly) (interchain with G-Cter in SUMO); alternate cross-links involve residues Lys-8 and Lys-9. Position 13 is an N6-acetyllysine (Lys-13). N6-acetyllysine; alternate is present on Lys-23. Lys-23 is covalently cross-linked (Glycyl lysine isopeptide (Lys-Gly) (interchain with G-Cter in SUMO); alternate). Residue Lys-24 forms a Glycyl lysine isopeptide (Lys-Gly) (interchain with G-Cter in SUMO) linkage. Lys-130 participates in a covalent cross-link: Glycyl lysine isopeptide (Lys-Gly) (interchain with G-Cter in ubiquitin).

It belongs to the histone H2B family. As to quaternary structure, the nucleosome is a histone octamer containing two molecules each of H2A, H2B, H3 and H4 assembled in one H3-H4 heterotetramer and two H2A-H2B heterodimers. The octamer wraps approximately 147 bp of DNA. In terms of processing, monoubiquitinated to form H2BK123ub1. H2BK123ub1 gives a specific tag for epigenetic transcriptional activation and is also prerequisite for H3K4me and H3K79me formation. H2BK123ub1 also modulates the formation of double-strand breaks during meiosis and is a prerequisite for DNA-damage checkpoint activation. Post-translationally, acetylated by GCN5 to form H2BK11ac and H2BK16ac. H2BK16ac can also be formed by ESA1. Acetylation of N-terminal lysines and particularly formation of H2BK11acK16ac has a positive effect on transcription. Sumoylation to form H2BK6su or H2BK7su, and probably also H2BK16su or H2BK17su, occurs preferentially near the telomeres and represses gene transcription.

It is found in the nucleus. The protein resides in the chromosome. In terms of biological role, core component of nucleosome. Nucleosomes wrap and compact DNA into chromatin, limiting DNA accessibility to the cellular machineries which require DNA as a template. Histones thereby play a central role in transcription regulation, DNA repair, DNA replication and chromosomal stability. DNA accessibility is regulated via a complex set of post-translational modifications of histones, also called histone code, and nucleosome remodeling. In Rosellinia necatrix (White root-rot fungus), this protein is Histone H2B (hh2b).